The sequence spans 327 residues: Phenylalanine--tRNA ligase alpha subunit (327 aa).

Glu-252 lines the Mg(2+) pocket.

This sequence belongs to the class-II aminoacyl-tRNA synthetase family. Phe-tRNA synthetase alpha subunit type 1 subfamily. In terms of assembly, tetramer of two alpha and two beta subunits. Mg(2+) is required as a cofactor.

It is found in the cytoplasm. It catalyses the reaction tRNA(Phe) + L-phenylalanine + ATP = L-phenylalanyl-tRNA(Phe) + AMP + diphosphate + H(+). The polypeptide is Phenylalanine--tRNA ligase alpha subunit (Yersinia pseudotuberculosis serotype O:1b (strain IP 31758)).